A 513-amino-acid polypeptide reads, in one-letter code: GMP synthase [glutamine-hydrolyzing] (513 aa).

The Glutamine amidotransferase type-1 domain occupies 8–198 (KIIVLDYGSQ…ALNICGAKGN (191 aa)). Catalysis depends on cysteine 85, which acts as the Nucleophile. Catalysis depends on residues histidine 172 and glutamate 174. Residues 199 to 388 (WSMENFIDMQ…LGMPDEIVWR (190 aa)) enclose the GMPS ATP-PPase domain. 226–232 (SGGVDSS) is a binding site for ATP.

As to quaternary structure, homodimer.

It catalyses the reaction XMP + L-glutamine + ATP + H2O = GMP + L-glutamate + AMP + diphosphate + 2 H(+). Its pathway is purine metabolism; GMP biosynthesis; GMP from XMP (L-Gln route): step 1/1. Catalyzes the synthesis of GMP from XMP. This chain is GMP synthase [glutamine-hydrolyzing] (guaA), found in Lactococcus lactis subsp. lactis (strain IL1403) (Streptococcus lactis).